A 470-amino-acid chain; its full sequence is Neuronal acetylcholine receptor subunit beta-4 (470 aa).

The signal sequence occupies residues 1–3 (STA). The Extracellular portion of the chain corresponds to 4 to 216 (ADAEEKLMNH…IIKRKPLFYT (213 aa)). Asn-29, Asn-118, and Asn-146 each carry an N-linked (GlcNAc...) asparagine glycan. Cys-133 and Cys-147 are disulfide-bonded. Residues 217–237 (INLIIPCVLITSLAILVFYLP) form a helical membrane-spanning segment. The Cytoplasmic segment spans residues 238 to 245 (SDCGEKMT). Position 242 (Glu-242) interacts with Na(+). A helical membrane pass occupies residues 246 to 266 (LCISVLLALTVFLLLISKIVP). Residues 267 to 278 (PTSLDVPLIGKY) are Extracellular-facing. A helical transmembrane segment spans residues 279–299 (LMFTMVLVTFSIVTSVCVLNV). Over 300-438 (HHRSPSTHTM…WKYVAMVVDR (139 aa)) the chain is Cytoplasmic. A helical transmembrane segment spans residues 439–459 (LFLWIFVLVCVLGTVGLFLQP). The Extracellular segment spans residues 460–470 (LFQNHIAATNP).

The protein belongs to the ligand-gated ion channel (TC 1.A.9) family. Acetylcholine receptor (TC 1.A.9.1) subfamily. Beta-4/CHRNB4 sub-subfamily. In terms of assembly, neuronal AChR is composed of two different types of subunits: alpha and beta. CHRNB4/Beta-4 subunit can be combined to CHRNA2/alpha-2, CHRNA3/alpha-3 or CHRNA4/alpha-4, CHRNA5/alpha-5 and CHRNB3/beta-3 to give rise to functional receptors.

The protein resides in the synaptic cell membrane. It localises to the cell membrane. It carries out the reaction Ca(2+)(in) = Ca(2+)(out). It catalyses the reaction K(+)(in) = K(+)(out). The catalysed reaction is Na(+)(in) = Na(+)(out). Its activity is regulated as follows. Activated by a myriad of ligands such as acetylcholine, cytisine, nicotine, choline and epibatidine. The heteropentamer CHRNA3:CHRNB4 activity is blocked by the alpha-conotoxin ImI and AuIB. In terms of biological role, component of neuronal acetylcholine receptors (nAChRs) that function as pentameric, ligand-gated cation channels with high calcium permeability among other activities. nAChRs are excitatory neurotrasnmitter receptors formed by a collection of nAChR subunits known to mediate synaptic transmission in the nervous system and the neuromuscular junction. Each nAchR subunit confers differential attributes to channel properties, including activation, deactivation and desensitization kinetics, pH sensitivity, cation permeability, and binding to allosteric modulators. CHRNB4 forms heteropentameric neuronal acetylcholine receptors with CHRNA2, CHRNA3 and CHRNA4, as well as CHRNA5 and CHRNB3 as accesory subunits. CHRNA3:CHRNB4 being predominant in neurons of the autonomic ganglia, it is known as ganglionic nicotinic receptor. CHRNA3:CHRNB4 or CHRNA3:CHRNA5:CHRNB4 play also an important role in the habenulo-interpeduncular tract, modulating the mesolimbic dopamine system and affecting reward circuits and addiction. Hypothalamic CHRNA3:CHRNB4 nAChR activation by nicotine leads to activation of POMC neurons and a decrease in food intake. The chain is Neuronal acetylcholine receptor subunit beta-4 (CHRNB4) from Gallus gallus (Chicken).